A 67-amino-acid polypeptide reads, in one-letter code: Small ribosomal subunit protein eS17 (67 aa).

It belongs to the eukaryotic ribosomal protein eS17 family.

This chain is Small ribosomal subunit protein eS17, found in Haloquadratum walsbyi (strain DSM 16790 / HBSQ001).